The following is an 89-amino-acid chain: Small ribosomal subunit protein uS15 (89 aa).

Belongs to the universal ribosomal protein uS15 family. As to quaternary structure, part of the 30S ribosomal subunit. Forms a bridge to the 50S subunit in the 70S ribosome, contacting the 23S rRNA.

Its function is as follows. One of the primary rRNA binding proteins, it binds directly to 16S rRNA where it helps nucleate assembly of the platform of the 30S subunit by binding and bridging several RNA helices of the 16S rRNA. Forms an intersubunit bridge (bridge B4) with the 23S rRNA of the 50S subunit in the ribosome. This is Small ribosomal subunit protein uS15 from Magnetococcus marinus (strain ATCC BAA-1437 / JCM 17883 / MC-1).